The primary structure comprises 1947 residues: DNA-directed RNA polymerase subunit beta' (1947 aa).

4 residues coordinate Zn(2+): cysteine 119, cysteine 121, cysteine 141, and cysteine 144. Aspartate 1778, aspartate 1780, and aspartate 1782 together coordinate Mg(2+).

Belongs to the RNA polymerase beta' chain family. RpoC1 subfamily. As to quaternary structure, in plastids the minimal PEP RNA polymerase catalytic core is composed of four subunits: alpha, beta, beta', and beta''. When a (nuclear-encoded) sigma factor is associated with the core the holoenzyme is formed, which can initiate transcription. The cofactor is Mg(2+). Zn(2+) serves as cofactor.

It is found in the plastid. Its subcellular location is the chloroplast. The catalysed reaction is RNA(n) + a ribonucleoside 5'-triphosphate = RNA(n+1) + diphosphate. Functionally, DNA-dependent RNA polymerase catalyzes the transcription of DNA into RNA using the four ribonucleoside triphosphates as substrates. This chain is DNA-directed RNA polymerase subunit beta', found in Oedogonium cardiacum (Filamentous green alga).